The sequence spans 168 residues: RNA annealing protein YRA2 (168 aa).

In terms of domain architecture, RRM spans 40 to 114; the sequence is FRLKITNIGL…KSIQVTLLDQ (75 aa). Residues 113–152 form a disordered region; it reads DQQKRKRDADQERRKLRHGPRGGYGSHYTKSQKPIEQRNK.

This sequence belongs to the YRA1 family. Associates with mRNPs.

It localises to the nucleus. Involved in export of poly(A) mRNAs from the nucleus. Recruited to the coding sequences as well as poly-A sites of active genes. The sequence is that of RNA annealing protein YRA2 (YRA2) from Candida glabrata (strain ATCC 2001 / BCRC 20586 / JCM 3761 / NBRC 0622 / NRRL Y-65 / CBS 138) (Yeast).